The following is a 258-amino-acid chain: Small ribosomal subunit protein uS2 (258 aa).

This sequence belongs to the universal ribosomal protein uS2 family.

This is Small ribosomal subunit protein uS2 from Granulibacter bethesdensis (strain ATCC BAA-1260 / CGDNIH1).